The following is a 1986-amino-acid chain: Protein Shroom3 (1986 aa).

A disordered region spans residues 1–21 (MKTPENLEEPSATPNPSRTPT). The 86-residue stretch at 24 to 109 (FVYLEALLEG…TLRLVVRRDV (86 aa)) folds into the PDZ domain. 5 disordered regions span residues 152-199 (CSEP…SSTS), 211-239 (RSPD…LLSP), 265-285 (TSSS…RSGS), 342-463 (QGCA…QPLL), and 564-1055 (NEDS…RRIF). Serine 212 is modified (phosphoserine). Polar residues-rich tracts occupy residues 357–376 (PSPS…TDNL) and 415–425 (PQTNSSGSQKT). The segment covering 430 to 440 (DQLHTVPERSP) has biased composition (basic and acidic residues). Residues serine 439 and serine 443 each carry the phosphoserine modification. Polar residues predominate over residues 595–607 (ACSNHHSLSSPQA). The segment covering 630–645 (QEDHNANLRQKVEREG) has biased composition (basic and acidic residues). Over residues 653-677 (NSGRTRSAFSSLQNIPESLRRQSNV) the composition is skewed to polar residues. Residues 747–761 (SGASQRRLSSSSSAA) show a composition bias toward low complexity. A compositionally biased stretch (basic and acidic residues) spans 774 to 785 (KVSRIEEREQGR). Low complexity-rich tracts occupy residues 796–814 (YGPG…TSSS) and 865–874 (DGRGPPARGG). Position 888 is a phosphoserine (serine 888). The segment covering 895–908 (EAEREASWSEDRPG) has biased composition (basic and acidic residues). Position 909 is a phosphothreonine (threonine 909). 2 positions are modified to phosphoserine: serine 912 and serine 969. The 97-residue stretch at 927-1023 (IKDAQSRVLG…SEPEKMNEVG (97 aa)) folds into the ASD1 domain. The span at 1004–1020 (LTVEQKKRSYSEPEKMN) shows a compositional bias: basic and acidic residues. A phosphoserine mark is found at serine 1063 and serine 1066. Disordered stretches follow at residues 1083–1102 (YIQR…PEAG), 1107–1223 (AQSA…AEDL), 1304–1425 (ATVA…PPWV), and 1446–1654 (ANLK…KTSE). Residues 1114–1127 (AGPAAPDGPGLASA) are compositionally biased toward low complexity. Residues 1134 to 1146 (REPEALPRKEHTH) show a composition bias toward basic and acidic residues. Phosphoserine occurs at positions 1175, 1179, and 1219. A compositionally biased stretch (low complexity) spans 1307–1318 (ASSAPPESSGAA). Residues serine 1350 and serine 1354 each carry the phosphoserine modification. Residues 1366–1399 (YRSQLAMDQQTGQQPPSSPASAVTQPTSPRSPEL) show a composition bias toward polar residues. A compositionally biased stretch (low complexity) spans 1455 to 1469 (PSRPSSCSTSDPDTP). The span at 1513 to 1524 (LPPPPPPSPPSE) shows a compositional bias: pro residues. Positions 1581-1630 (EGSQIMTATPPQTSAKGSEAESNTPSSASAQPQLNGSPGKQLCPSQTRNL) are enriched in polar residues. Positions 1634 to 1654 (PVERTQDLGKKTHAEPQKTSE) are enriched in basic and acidic residues. The region spanning 1659–1947 (EALAKEIVHQ…QVRCLLESLP (289 aa)) is the ASD2 domain. A coiled-coil region spans residues 1844-1890 (RLARVENVLRGLGEDASKEERSSLNEKRKVLAGQHEDARELKENLDR).

The protein belongs to the shroom family. As to quaternary structure, interacts with F-actin. Interacts with ROCK1.

The protein resides in the cell junction. It localises to the adherens junction. Its subcellular location is the cytoplasm. It is found in the cytoskeleton. The protein localises to the apical cell membrane. Controls cell shape changes in the neuroepithelium during neural tube closure. Induces apical constriction in epithelial cells by promoting the apical accumulation of F-actin and myosin II, and probably by bundling stress fibers. Induces apicobasal cell elongation by redistributing gamma-tubulin and directing the assembly of robust apicobasal microtubule arrays. The protein is Protein Shroom3 (Shroom3) of Mus musculus (Mouse).